Reading from the N-terminus, the 116-residue chain is Nucleoid-associated protein P9515_00191 (116 aa).

Over residues 89-98 the composition is skewed to basic and acidic residues; sequence STTTMKERMN. The segment at 89–116 is disordered; it reads STTTMKERMNDLTGGLNLNLPGLDNNDS. The span at 99–116 shows a compositional bias: low complexity; that stretch reads DLTGGLNLNLPGLDNNDS.

Belongs to the YbaB/EbfC family. In terms of assembly, homodimer.

Its subcellular location is the cytoplasm. It is found in the nucleoid. Its function is as follows. Binds to DNA and alters its conformation. May be involved in regulation of gene expression, nucleoid organization and DNA protection. The chain is Nucleoid-associated protein P9515_00191 from Prochlorococcus marinus (strain MIT 9515).